A 202-amino-acid chain; its full sequence is NAD(P)H dehydrogenase (quinone) 2 (202 aa).

The Flavodoxin-like domain occupies 4–190 (VLVLYYSSYG…AGAFHQGEIV (187 aa)). FMN contacts are provided by residues 10-15 (SSYGHI) and 78-80 (TRF). Y12 contributes to the NAD(+) binding site. Substrate is bound at residue W98. FMN contacts are provided by residues 113–119 (STGTQHG) and H134.

This sequence belongs to the WrbA family. FMN serves as cofactor.

The enzyme catalyses a quinone + NADH + H(+) = a quinol + NAD(+). The catalysed reaction is a quinone + NADPH + H(+) = a quinol + NADP(+). In Rhizobium meliloti (strain 1021) (Ensifer meliloti), this protein is NAD(P)H dehydrogenase (quinone) 2.